A 206-amino-acid polypeptide reads, in one-letter code: Protein GET1 (206 aa).

Over 1–4 (MPSL) the chain is Lumenal. Residues 5-24 (LITILLLNIVIYVINTIGAA) form a helical membrane-spanning segment. Residues 25-110 (TIDSLLWLFY…SFDMTVKSVR (86 aa)) are Cytoplasmic-facing. The stretch at 42-99 (SHMAREQRRLKREVIQLKREMNATSSQDEFAKWAKLRRRHDKALETYEAKNNELTQCK) forms a coiled coil. The chain crosses the membrane as a helical span at residues 111–131 (WAATSGLMLFLQFWYSKRPIF). The Lumenal segment spans residues 132–155 (TLPPGWIPWQVQWVLSFPRAPMGT). Residues 156-172 (VSIQIWGGACATVVALV) traverse the membrane as a helical segment. Residues 173–206 (GDAVGATMGFVSASKKEGMKVGAGVGEKEGKKSQ) are Cytoplasmic-facing.

The protein belongs to the WRB/GET1 family. Interacts with GET3.

The protein resides in the endoplasmic reticulum membrane. Required for the post-translational delivery of tail-anchored (TA) proteins to the endoplasmic reticulum. Acts as a membrane receptor for soluble GET3, which recognizes and selectively binds the transmembrane domain of TA proteins in the cytosol. The sequence is that of Protein GET1 from Ajellomyces dermatitidis (strain ER-3 / ATCC MYA-2586) (Blastomyces dermatitidis).